Consider the following 343-residue polypeptide: Probable long-chain-alcohol O-fatty-acyltransferase 2 (343 aa).

Helical transmembrane passes span 7-27 (NLIKVWISALISISYCYYISS), 36-56 (LLSLLPIFIIFLLLPLFFSSV), 58-78 (FCVISGFFFTWLANFKLFLFA), 117-137 (PMSKWVLAFKLLIFSFLLHVY), 148-168 (FAFLALFTIHVYLEAELILVF), 235-255 (GMLATFIVSGLMHELIYFYVI), 260-280 (TWEVTCFFLLHGVVTCLEIAM), and 292-312 (AVSGLAITVFLLVTAGWLFYP).

It belongs to the wax synthase family.

Its subcellular location is the membrane. The enzyme catalyses a long chain fatty alcohol + a fatty acyl-CoA = a wax ester + CoA. Its function is as follows. Catalyzes the final step in the synthesis of long-chain linear esters (waxes). The sequence is that of Probable long-chain-alcohol O-fatty-acyltransferase 2 (AT2) from Arabidopsis thaliana (Mouse-ear cress).